A 74-amino-acid polypeptide reads, in one-letter code: Large ribosomal subunit protein bL31 (74 aa).

C16, C18, C38, and C41 together coordinate Zn(2+).

It belongs to the bacterial ribosomal protein bL31 family. Type A subfamily. Part of the 50S ribosomal subunit. The cofactor is Zn(2+).

Functionally, binds the 23S rRNA. The protein is Large ribosomal subunit protein bL31 of Acinetobacter baylyi (strain ATCC 33305 / BD413 / ADP1).